The following is a 393-amino-acid chain: Bifunctional enzyme Fae/Hps (393 aa).

Positions 1-161 are formaldehyde-activating enzyme; it reads MYLIGEALIG…HEKDRAAHAV (161 aa). H17 serves as the catalytic Proton donor. 5 residues coordinate substrate: D19, L48, K66, T68, and Q83. The 3-hexulose-6-phosphate synthase stretch occupies residues 162-393; that stretch reads MGFKVPRLWD…IDQFRIMTDF (232 aa).

The protein in the N-terminal section; belongs to the formaldehyde-activating enzyme family. It in the C-terminal section; belongs to the HPS/KGPDC family. HPS subfamily.

The enzyme catalyses 5,6,7,8-tetrahydromethanopterin + formaldehyde = 5,10-methylenetetrahydromethanopterin + H2O. The catalysed reaction is D-ribulose 5-phosphate + formaldehyde = D-arabino-hex-3-ulose 6-phosphate. It functions in the pathway carbohydrate biosynthesis; D-ribose 5-phosphate biosynthesis. Catalyzes the condensation of formaldehyde with tetrahydromethanopterin (H(4)MPT) to 5,10-methylenetetrahydromethanopterin. In terms of biological role, catalyzes the reversible formation of ribulose-5-phosphate and formaldehyde from 3-hexulose-6-phosphate. In Methanospirillum hungatei JF-1 (strain ATCC 27890 / DSM 864 / NBRC 100397 / JF-1), this protein is Bifunctional enzyme Fae/Hps.